A 601-amino-acid polypeptide reads, in one-letter code: Sodium-dependent phosphate transport protein 2C (601 aa).

Residues 1–75 lie on the Cytoplasmic side of the membrane; that stretch reads MPNSLAGDQV…HQVVSGFLKA (75 aa). S4 is modified (phosphoserine). A helical transmembrane segment spans residues 76–96; sequence CGLLGSLYFFICSLDILSSAF. At 97 to 110 the chain is on the extracellular side; sequence QLLGSKMAGDIFKD. The helical transmembrane segment at 111–131 threads the bilayer; sequence NVVLSNPVAGLVIGVVVTVLV. Topologically, residues 132–187 are cytoplasmic; sequence QSSSTSSSIVVSMVASKSLTVQASVPIIMGVNVGTSITSTLVSMAQSGDRDEFQRA. Residues 188–208 form a helical membrane-spanning segment; it reads FGGSAVHGIFNWLTVLVLLPL. Residues 209-324 lie on the Extracellular side of the membrane; sequence ENATAALERL…FAGSELTDLA (116 aa). 4 N-linked (GlcNAc...) asparagine glycosylation sites follow: N210, N264, N267, and N299. A disulfide bridge connects residues C275 and C311. The chain crosses the membrane as a helical span at residues 325-345; it reads VGFILLAGSLLVLCVCLVLIV. The Cytoplasmic segment spans residues 346-369; the sequence is KLLNSVLRGRIAQAVKTVINADFP. A helical membrane pass occupies residues 370–390; that stretch reads FPFGWLSGYLAILVGAGLTFL. Topologically, residues 391-447 are extracellular; sequence LQSSSVFTAAIVPLMGVGVINLERAYPLFLGSNIGTTTTALLAALASPADTLLFAVQ. The helical transmembrane segment at 448–468 threads the bilayer; that stretch reads VALIHFFFNLAGILLWYLVPV. Topologically, residues 469–487 are cytoplasmic; sequence LRLPIPLAKRFGDLTAQYR. Residues 488-508 form a helical membrane-spanning segment; that stretch reads WVAIVYLLLTFLLLPLAAFGL. Over 509–512 the chain is Extracellular; sequence SLAG. The helical transmembrane segment at 513–533 threads the bilayer; sequence GSVLAAVGGPLVGLVLLIILV. The Cytoplasmic portion of the chain corresponds to 534-601; sequence NVLQRHRPSW…NPQVIASQQL (68 aa).

It belongs to the SLC34A transporter family. As to expression, highly expressed in the kidney. Not found in any of the other tested tissues.

The protein resides in the apical cell membrane. The catalysed reaction is 2 Na(+)(out) + phosphate(out) = 2 Na(+)(in) + phosphate(in). In terms of biological role, involved in actively transporting phosphate into cells via Na(+) cotransport in the renal brush border membrane. The cotransport has a Na(+):Pi stoichiometry of 2:1 and is electroneutral. The polypeptide is Sodium-dependent phosphate transport protein 2C (Slc34a3) (Rattus norvegicus (Rat)).